The following is a 274-amino-acid chain: Large ribosomal subunit protein uL2 (274 aa).

Disordered regions lie at residues 28-55 and 224-274; these read APHA…RHVG and VAMN…RRRK.

Belongs to the universal ribosomal protein uL2 family. In terms of assembly, part of the 50S ribosomal subunit. Forms a bridge to the 30S subunit in the 70S ribosome.

Its function is as follows. One of the primary rRNA binding proteins. Required for association of the 30S and 50S subunits to form the 70S ribosome, for tRNA binding and peptide bond formation. It has been suggested to have peptidyltransferase activity; this is somewhat controversial. Makes several contacts with the 16S rRNA in the 70S ribosome. The protein is Large ribosomal subunit protein uL2 of Pseudomonas putida (strain ATCC 47054 / DSM 6125 / CFBP 8728 / NCIMB 11950 / KT2440).